The sequence spans 1057 residues: Desmoglein-1-alpha (1057 aa).

Positions 1–23 (MDWHSFRIAALLLTSLVVLEVNS) are cleaved as a signal peptide. A propeptide spanning residues 24-49 (EFQIQVRDHNAKNGTIKWHSIRRQKR) is cleaved from the precursor. 4 Cadherin domains span residues 50-157 (EWIK…PPVF), 158-269 (SMTT…IPYL), 270-389 (EQSS…RPGS), and 386-493 (RPGS…TGSE). The Extracellular portion of the chain corresponds to 50 to 564 (EWIKFAAACR…LYGDNVHFGP (515 aa)). 2 N-linked (GlcNAc...) asparagine glycosylation sites follow: Asn110 and Asn180. Residues 490–552 (TGSESGGSSS…FQGDPDETLE (63 aa)) are disordered. The segment covering 510–525 (NGYQGTSSTENPQRVT) has biased composition (polar residues). The chain crosses the membrane as a helical span at residues 565–585 (AGIGLLIMGFLVLGLVPFLLI). At 586 to 1057 (CCDCGGAPGG…TKYNTVQYSK (472 aa)) the chain is on the cytoplasmic side. 5 Desmoglein repeat repeats span residues 832–858 (AYHS…TVRE), 859–888 (SYTT…ERVV), 889–918 (GPIS…ERVI), 919–946 (APGS…ERVI), and 947–975 (QPTS…ERVV).

In terms of assembly, binds to JUP/plakoglobin. Interacts with PKP2. Interacts with DSC3; there is evidence to suggest that the interaction promotes cell-cell adhesion of keratinocytes. In terms of tissue distribution, expressed in testis.

The protein localises to the cell membrane. It is found in the cell junction. It localises to the desmosome. Its subcellular location is the cytoplasm. The protein resides in the nucleus. Component of intercellular desmosome junctions. Involved in the interaction of plaque proteins and intermediate filaments mediating cell-cell adhesion. This chain is Desmoglein-1-alpha (Dsg1a), found in Mus musculus (Mouse).